The sequence spans 262 residues: Acyl-[acyl-carrier-protein]--UDP-N-acetylglucosamine O-acyltransferase (262 aa).

It belongs to the transferase hexapeptide repeat family. LpxA subfamily. As to quaternary structure, homotrimer.

The protein localises to the cytoplasm. The enzyme catalyses a (3R)-hydroxyacyl-[ACP] + UDP-N-acetyl-alpha-D-glucosamine = a UDP-3-O-[(3R)-3-hydroxyacyl]-N-acetyl-alpha-D-glucosamine + holo-[ACP]. It functions in the pathway glycolipid biosynthesis; lipid IV(A) biosynthesis; lipid IV(A) from (3R)-3-hydroxytetradecanoyl-[acyl-carrier-protein] and UDP-N-acetyl-alpha-D-glucosamine: step 1/6. Its function is as follows. Involved in the biosynthesis of lipid A, a phosphorylated glycolipid that anchors the lipopolysaccharide to the outer membrane of the cell. The sequence is that of Acyl-[acyl-carrier-protein]--UDP-N-acetylglucosamine O-acyltransferase from Aliivibrio fischeri (strain ATCC 700601 / ES114) (Vibrio fischeri).